A 372-amino-acid chain; its full sequence is MIFPWKCQSTQRDLWNIFKLWGWTMLCCDFLAHHGTDCWTYHYSEKPMNWQRARRFCRDNYTDLVAIQNKAEIEYLEKTLPFSRSYYWIGIRKIGGIWTWVGTNKSLTEEAENWGDGEPNNKKNKEDCVEIYIKRNKDAGKWNDDACHKLKAALCYTASCQPWSCSGHGECVEIINNYTCNCDVGYYGPQCQFVIQCEPLEAPELGTMDCTHPLGNFSFSSQCAFSCSEGTNLTGIEETTCGPFGNWSSPEPTCQVIQCEPLSAPDLGIMNCSHPLASFSFTSACTFICSEGTELIGKKKTICESSGIWSNPSPICQKLDKSFSMIKEGDYNPLFIPVAVMVTAFSGLAFIIWLARRLKKGKKSKRSMDDPY.

The first 28 residues, 1 to 28 (MIFPWKCQSTQRDLWNIFKLWGWTMLCC), serve as a signal peptide directing secretion. Positions 29-38 (DFLAHHGTDC) are excised as a propeptide. Residues 39 to 332 (WTYHYSEKPM…FSMIKEGDYN (294 aa)) are Extracellular-facing. In terms of domain architecture, C-type lectin spans 55–155 (RFCRDNYTDL…ACHKLKAALC (101 aa)). 10 disulfides stabilise this stretch: Cys57–Cys155, Cys128–Cys147, Cys128–Cys160, Cys160–Cys171, Cys165–Cys180, Cys182–Cys191, Cys197–Cys241, Cys227–Cys254, Cys259–Cys303, and Cys289–Cys316. N-linked (GlcNAc...) asparagine glycosylation is found at Asn60 and Asn104. 5 residues coordinate Ca(2+): Glu118, Asn120, Glu126, Asn143, and Asp144. The EGF-like domain occupies 156 to 192 (YTASCQPWSCSGHGECVEIINNYTCNCDVGYYGPQCQ). Asn177 is a glycosylation site (N-linked (GlcNAc...) asparagine). 2 consecutive Sushi domains span residues 195 to 256 (IQCE…TCQV) and 257 to 318 (IQCE…ICQK). N-linked (GlcNAc...) asparagine glycans are attached at residues Asn216, Asn232, Asn246, and Asn271. The helical transmembrane segment at 333–355 (PLFIPVAVMVTAFSGLAFIIWLA) threads the bilayer. The Cytoplasmic segment spans residues 356-372 (RRLKKGKKSKRSMDDPY).

The protein belongs to the selectin/LECAM family. As to quaternary structure, interaction with SELPLG/PSGL1 and PODXL2 is required for promoting recruitment and rolling of leukocytes. This interaction is dependent on the sialyl Lewis X glycan modification of SELPLG and PODXL2, and tyrosine sulfation modifications of SELPLG. Sulfation on 'Tyr-51' of SELPLG is important for L-selectin binding. N-glycosylated.

The protein localises to the cell membrane. In terms of biological role, calcium-dependent lectin that mediates cell adhesion by binding to glycoproteins on neighboring cells. Mediates the adherence of lymphocytes to endothelial cells of high endothelial venules in peripheral lymph nodes. Promotes initial tethering and rolling of leukocytes in endothelia. The sequence is that of L-selectin (SELL) from Pan troglodytes (Chimpanzee).